A 359-amino-acid polypeptide reads, in one-letter code: Histidinol-phosphate aminotransferase 1 (359 aa).

K216 is modified (N6-(pyridoxal phosphate)lysine).

It belongs to the class-II pyridoxal-phosphate-dependent aminotransferase family. Histidinol-phosphate aminotransferase subfamily. In terms of assembly, homodimer. It depends on pyridoxal 5'-phosphate as a cofactor.

The enzyme catalyses L-histidinol phosphate + 2-oxoglutarate = 3-(imidazol-4-yl)-2-oxopropyl phosphate + L-glutamate. Its pathway is amino-acid biosynthesis; L-histidine biosynthesis; L-histidine from 5-phospho-alpha-D-ribose 1-diphosphate: step 7/9. The protein is Histidinol-phosphate aminotransferase 1 (hisC1) of Caulobacter vibrioides (strain ATCC 19089 / CIP 103742 / CB 15) (Caulobacter crescentus).